We begin with the raw amino-acid sequence, 227 residues long: UPF0173 metal-dependent hydrolase Oter_4201 (227 aa).

The protein belongs to the UPF0173 family.

In Opitutus terrae (strain DSM 11246 / JCM 15787 / PB90-1), this protein is UPF0173 metal-dependent hydrolase Oter_4201.